Reading from the N-terminus, the 258-residue chain is UPF0328 protein ECU07_0060 (258 aa).

It belongs to the UPF0328 family.

This Encephalitozoon cuniculi (strain GB-M1) (Microsporidian parasite) protein is UPF0328 protein ECU07_0060.